The chain runs to 531 residues: Multidrug resistance protein fnx1 (531 aa).

The Cytoplasmic portion of the chain corresponds to 1–30; the sequence is MVDQVNLATEQTSLLYPEVSRKKEELSVNK. A helical transmembrane segment spans residues 31–51; sequence WTILPALWVGGFLSALDMTIV. The Lumenal segment spans residues 52–225; that stretch reads ASLYPVIGSE…NASLLSRIDY (174 aa). A helical membrane pass occupies residues 226-246; sequence LGSFLLVTGITALVVTFNMGG. Residues 247 to 252 lie on the Cytoplasmic side of the membrane; it reads DAFPWV. Residues 253 to 273 form a helical membrane-spanning segment; sequence SPVIITLLVSSVLILFAFYWV. Residues 274 to 297 are Lumenal-facing; it reads EKNIAVEPIAPVEILSQPTPLNVC. The helical transmembrane segment at 298–318 threads the bilayer; the sequence is LGNFFNAFCSFVIVYELPLFF. Residues 319–360 are Cytoplasmic-facing; that stretch reads ETTLLMPSSEAGVRIFPYVISTSVGSLCSGLYMKKTGRYRNL. The helical transmembrane segment at 361–381 threads the bilayer; sequence VIAGFFFMLMGIVSFAVLTSF. Residues 382–385 are Lumenal-facing; it reads GHRT. The helical transmembrane segment at 386–406 threads the bilayer; that stretch reads PLILISLCLAMTGCSYGMNLT. The Cytoplasmic portion of the chain corresponds to 407-496; the sequence is STLIAIISSL…QKLVIKSYAT (90 aa). A helical transmembrane segment spans residues 497–517; the sequence is AFTWTFALVAIIAFAGFWCSL. At 518 to 531 the chain is on the lumenal side; it reads RIKQFYLHTSVDRS.

Belongs to the major facilitator superfamily.

It is found in the vacuole membrane. In terms of biological role, efflux transporter. Confers resistance to a variety of toxic compounds. The protein is Multidrug resistance protein fnx1 (fnx1) of Schizosaccharomyces pombe (strain 972 / ATCC 24843) (Fission yeast).